We begin with the raw amino-acid sequence, 208 residues long: Large ribosomal subunit protein bL25 (208 aa).

It belongs to the bacterial ribosomal protein bL25 family. CTC subfamily. Part of the 50S ribosomal subunit; part of the 5S rRNA/L5/L18/L25 subcomplex. Contacts the 5S rRNA. Binds to the 5S rRNA independently of L5 and L18.

This is one of the proteins that binds to the 5S RNA in the ribosome where it forms part of the central protuberance. This chain is Large ribosomal subunit protein bL25, found in Leptothrix cholodnii (strain ATCC 51168 / LMG 8142 / SP-6) (Leptothrix discophora (strain SP-6)).